A 468-amino-acid polypeptide reads, in one-letter code: Uronate isomerase (468 aa).

Belongs to the metallo-dependent hydrolases superfamily. Uronate isomerase family.

The catalysed reaction is D-glucuronate = D-fructuronate. It catalyses the reaction aldehydo-D-galacturonate = keto-D-tagaturonate. It functions in the pathway carbohydrate metabolism; pentose and glucuronate interconversion. This is Uronate isomerase from Bacteroides fragilis (strain ATCC 25285 / DSM 2151 / CCUG 4856 / JCM 11019 / LMG 10263 / NCTC 9343 / Onslow / VPI 2553 / EN-2).